The primary structure comprises 822 residues: MAQRFQLNSQTLPTADPLKRVSLIPRSAEQRLADNAGERRPLAPRSHEDNPFGGHTDDHHVAAPADHNKVMDHNSENLGSIVPKTAHYPHPSEEILDANIRHSMVPKSLGPNSLGGRFGPGKKQAFHRNGRPMFSLSDDRVMADRVLKTHSPDMIFFDVTSLLSVVNDIFKSHVPSIDSSAPKPSLVFKDYADHTSFETFADLIDQISCEIDCKCLHGGESHGMMTSGLHLDSRNTTTFSVLSLVSKYRWDAKLVLVLSALAVKYGVFLLLAETHATNQLTKSLALIKQLPSIFSRQNALHQRLDKTRILMQDMVDLTTTIIDIYQLPPNHITAAFTDHIPTAVYWIVRCVLICVSHISGASGFKQDQIMSFMEVSEIHENSERLRKINAYLLEQFKKSKMTIEEGIIEEEYQELIQTFTTIIHVDVVPPLLRLLRPIDFLYHGAGVSKRRVGINVLTQKHVLLLISDLENIEKELYILESLYTEAWQQSFEILWVPVQDFWTEADDAKFEALHMNMRWYVLGEPRKLRRAAIRFVREWWGFKNRPILVALDPKGQVMSTNAFPMVWIWQPFAHPFTTARERDLWSEQEWNLEFLIDGTDPHSLNQLVDGKYICLYGGEDMQWIKNFTSLWRNVAKAANIQLEMVYVGKRNPKNGIQPIINTIREENLSHTLPDLFQIWFFWTRVESMWESKQRMLKAHGIKGREGFKEEEKDLVLQEVVAMLGYGGEGDGWGLVSKASDMMVRAKGNLFSRGLAEFNEWEVNIPTKGFLTALNDHLLMRLPPHHCTRFMLPETAGIIPNEVECTECRRTMEKYYLYQCCLE.

The segment at P25 to A62 is disordered. Residues A28–A62 show a composition bias toward basic and acidic residues.

In terms of assembly, can form homodimer. Expressed in phloem sieve elements.

Scaffold protein required to form the phloem filament matrix in sieve elements. The sequence is that of Protein SIEVE ELEMENT OCCLUSION A from Arabidopsis thaliana (Mouse-ear cress).